We begin with the raw amino-acid sequence, 460 residues long: Cysteine--tRNA ligase (460 aa).

Zn(2+) is bound at residue Cys-28. The 'HIGH' region signature appears at 30–40 (MTVYDYCHLGH). Zn(2+) is bound by residues Cys-209, His-234, and Glu-238. The 'KMSKS' region motif lies at 266-270 (KMSKS). Lys-269 lines the ATP pocket.

Belongs to the class-I aminoacyl-tRNA synthetase family. As to quaternary structure, monomer. Requires Zn(2+) as cofactor.

Its subcellular location is the cytoplasm. It catalyses the reaction tRNA(Cys) + L-cysteine + ATP = L-cysteinyl-tRNA(Cys) + AMP + diphosphate. This is Cysteine--tRNA ligase from Pseudomonas savastanoi pv. phaseolicola (strain 1448A / Race 6) (Pseudomonas syringae pv. phaseolicola (strain 1448A / Race 6)).